We begin with the raw amino-acid sequence, 233 residues long: MKLLNSLILLVLTCLVSSINTQFISIQKYDFSGNCKNSSDSASSFEASSESAAICMQNDLLSGIVTNEGVCLIFNEVPTTFIISTKGDYIVRSIYDINDNNCQGGIIENKAIEIDECFVECADDYHGSTYLFSTETSLNYPSNTFMEISYNGECDGQWKTSFNYLQYYIVNKCNVAHEIETHTFSVGCNSTSSWVSEYAGEVCTVEPTVTTSYPIVDNCGDLDNSNFIDYCNI.

Residues 1-21 (MKLLNSLILLVLTCLVSSINT) form the signal peptide. Asparagine 37 and asparagine 189 each carry an N-linked (GlcNAc...) asparagine glycan.

It is found in the secreted. This is Counting factor-associated protein A (cfaA) from Dictyostelium discoideum (Social amoeba).